A 226-amino-acid polypeptide reads, in one-letter code: dITP/XTP pyrophosphatase (226 aa).

Substrate is bound at residue 14–19 (TGNKDK). 2 residues coordinate Mg(2+): Glu-49 and Asp-83. Asp-83 acts as the Proton acceptor in catalysis. Residues Thr-84, 176-179 (FGYD), Lys-199, and 204-205 (HR) each bind substrate.

It belongs to the HAM1 NTPase family. Homodimer. The cofactor is Mg(2+).

It catalyses the reaction XTP + H2O = XMP + diphosphate + H(+). The catalysed reaction is dITP + H2O = dIMP + diphosphate + H(+). It carries out the reaction ITP + H2O = IMP + diphosphate + H(+). Functionally, pyrophosphatase that catalyzes the hydrolysis of nucleoside triphosphates to their monophosphate derivatives, with a high preference for the non-canonical purine nucleotides XTP (xanthosine triphosphate), dITP (deoxyinosine triphosphate) and ITP. Seems to function as a house-cleaning enzyme that removes non-canonical purine nucleotides from the nucleotide pool, thus preventing their incorporation into DNA/RNA and avoiding chromosomal lesions. This is dITP/XTP pyrophosphatase from Chlorobaculum tepidum (strain ATCC 49652 / DSM 12025 / NBRC 103806 / TLS) (Chlorobium tepidum).